Consider the following 412-residue polypeptide: MNKLSINDVDVRDKRVLIRVDFNVPLKNGQISNNQRIAAALPTIKLALEKGAKSVVLMSHLGRPDGRPIHAASMKPVVAELENLLGKKIMFLEDCVGSKVEAACANPEPGSVILLENLRFHVEKEGKGKDAQGNKAKADDAAVAAFRASLSKLGDVYVNDAFGTAHRAHSSMVGVDLPVKACGLLMKKELDYFAKALENPARPFLAILGGAKVADKIQLIENLMDKVNEMIIGGGMAFTFLKVLNNMDIGGSLFDEGAKIVGRLVDKAKEKGVKLHLPSDFITGDKFADVAKSATASVASGIPEGWMGLDVGTKTNEVFQKVIEGAKTIVWNGPPGVFEFENFSTGSKQMMDSVVRATEAGTITIIGGCDTATCAKNSNATEKVSHVSTGSGTSLELLEGKILPGVAALSQP.

(2R)-3-phosphoglycerate contacts are provided by valine 20, aspartate 21, phenylalanine 22, asparagine 23, glutamine 35, arginine 36, serine 59, histidine 60, glycine 62, arginine 63, leucine 118, arginine 119, histidine 166, and arginine 167. Residue glycine 210 coordinates ADP. Residue glycine 210 coordinates CDP. Residues alanine 211 and lysine 212 each coordinate AMP. Residue alanine 211 coordinates ATP. Alanine 211 lines the Mg(2+) pocket. Mg(2+)-binding residues include alanine 214 and aspartate 215. Aspartate 215 is a CDP binding site. Lysine 216 serves as a coordination point for AMP. ATP is bound at residue lysine 216. Residue glycine 234 coordinates ADP. Glycine 234 contacts CDP. Positions 235 and 308 each coordinate AMP. ATP contacts are provided by glycine 235 and glycine 308. CDP is bound by residues glycine 333 and phenylalanine 338. Residue phenylalanine 338 participates in ADP binding. Glutamate 339 serves as a coordination point for AMP. ATP is bound by residues glutamate 339, aspartate 370, and threonine 371. Aspartate 370 contacts Mg(2+).

Belongs to the phosphoglycerate kinase family. Monomer. Requires Mg(2+) as cofactor.

The protein localises to the cytoplasm. It catalyses the reaction (2R)-3-phosphoglycerate + ATP = (2R)-3-phospho-glyceroyl phosphate + ADP. It participates in carbohydrate degradation; glycolysis; pyruvate from D-glyceraldehyde 3-phosphate: step 2/5. Its function is as follows. Catalyzes one of the two ATP producing reactions in the glycolytic pathway via the reversible conversion of 1,3-diphosphoglycerate to 3-phosphoglycerate. In addition to its role as a glycolytic enzyme, it seems that PGK-1 acts as a polymerase alpha cofactor protein (primer recognition protein). May play a role in sperm motility. This is Phosphoglycerate kinase (PGK) from Aplysia californica (California sea hare).